The sequence spans 239 residues: Large ribosomal subunit protein uL2 (239 aa).

2 disordered regions span residues 1-21 and 203-239; these read MGKS…KSPS and PFGG…GRRK. Residues 222-239 are compositionally biased toward basic residues; it reads PPGRKVGHIAARRTGRRK.

It belongs to the universal ribosomal protein uL2 family. In terms of assembly, part of the 50S ribosomal subunit. Forms a bridge to the 30S subunit in the 70S ribosome.

In terms of biological role, one of the primary rRNA binding proteins. Required for association of the 30S and 50S subunits to form the 70S ribosome, for tRNA binding and peptide bond formation. It has been suggested to have peptidyltransferase activity; this is somewhat controversial. Makes several contacts with the 16S rRNA in the 70S ribosome. This Pyrococcus furiosus (strain ATCC 43587 / DSM 3638 / JCM 8422 / Vc1) protein is Large ribosomal subunit protein uL2.